We begin with the raw amino-acid sequence, 177 residues long: Interleukin-1 receptor antagonist protein (177 aa).

The first 25 residues, 1 to 25 (MEVSRYLCSYLISFLLFLFHSETAC), serve as a signal peptide directing secretion. A disulfide bridge connects residues cysteine 91 and cysteine 141. Residue asparagine 109 is glycosylated (N-linked (GlcNAc...) asparagine).

It belongs to the IL-1 family.

Its subcellular location is the secreted. In terms of biological role, anti-inflammatory antagonist of interleukin-1 family of proinflammatory cytokines such as interleukin-1beta/IL1B and interleukin-1alpha/IL1A. Protects from immune dysregulation and uncontrolled systemic inflammation triggered by IL1 for a range of innate stimulatory agents such as pathogens. This Sus scrofa (Pig) protein is Interleukin-1 receptor antagonist protein (IL1RN).